The following is a 223-amino-acid chain: Transcriptional regulator HMO1 (223 aa).

2 disordered regions span residues 69–89 (IEAT…APKK) and 165–223 (DGSA…HGSP). The segment covering 70–86 (EATESKKKRKQEKDPNA) has biased composition (basic and acidic residues). A DNA-binding region (HMG box) is located at residues 87–160 (PKKPLTMFFQ…IYNIEKKKYE (74 aa)). Residues 204-223 (KKKKKTEKKEKKKKSGHGSP) show a composition bias toward basic residues.

It localises to the nucleus. In terms of biological role, transcription factor that binds upstream of hexose and ergosterol metabolism, as well as cell cycle genes. Activates pseudohyphal growth. In Candida albicans (strain SC5314 / ATCC MYA-2876) (Yeast), this protein is Transcriptional regulator HMO1 (HMO1).